We begin with the raw amino-acid sequence, 203 residues long: V-type ATP synthase subunit D (203 aa).

It belongs to the V-ATPase D subunit family.

Produces ATP from ADP in the presence of a proton gradient across the membrane. This chain is V-type ATP synthase subunit D, found in Streptococcus pneumoniae serotype 19F (strain G54).